Here is a 102-residue protein sequence, read N- to C-terminus: Salivary thrombin inhibitor anophelin (102 aa).

The signal sequence occupies residues 1–21; sequence MATKLIVIAFLCAALIAVVQS. Positions 25 to 102 are disordered; that stretch reads YAQGEEPTYD…SDSSSESTEH (78 aa). The span at 59–69 shows a compositional bias: polar residues; that stretch reads SQLTEYANTAQ. Positions 70 to 73 are blocks active site cleft of host thrombin in a reverse direction compared to substrates; that stretch reads DPGR. The segment covering 80-90 has biased composition (polar residues); sequence QANSNNGDQLP. Residues 91–102 show a composition bias toward low complexity; that stretch reads SQSDSSSESTEH.

Belongs to the anophelin family. As to quaternary structure, interacts with human F2 (thrombin); the interaction results in thrombin inhibition.

The protein localises to the secreted. Functionally, salivary protein with anticoagulant activity that inhibits host thrombin (F2). The protein is Salivary thrombin inhibitor anophelin of Anopheles funestus (African malaria mosquito).